A 736-amino-acid polypeptide reads, in one-letter code: Gingipain R2 (736 aa).

The signal sequence occupies residues Met1–Ala24. A propeptide spanning residues Gln25–Arg229 is cleaved from the precursor. Residues Asp307, Val329, Asp332, Tyr334, Glu336, Glu390, and His395 each coordinate Ca(2+). His440 functions as the Proton donor in the catalytic mechanism. The Nucleophile role is filled by Cys473. Positions 478, 487, 521, 522, 525, 531, 613, and 639 each coordinate Ca(2+).

This sequence belongs to the peptidase C25 family.

Its subcellular location is the secreted. The enzyme catalyses Hydrolysis of proteins and small molecule substrates, with a preference for Arg in P1.. Its activity is regulated as follows. Inhibited by human histatin-3 1/24 (histatin-5). Its function is as follows. Thiol protease. Acts synergistically with RgpA to catalyze the maturation of fimbrial subunits, such as FimA. Its proteolytic activity is a major factor in both periodontal tissue destruction and in evasion of host defense mechanisms. The protein is Gingipain R2 (rgpB) of Porphyromonas gingivalis (strain ATCC BAA-308 / W83).